The sequence spans 634 residues: TATA box-binding protein-associated factor RNA polymerase I subunit B (634 aa).

Residues 19–51 form an RRN7-type zinc finger; the sequence is LVCEYCGHGSEYAEDDADDGFFTCRQCSAIHTS. Residues Cys21, Cys24, Cys42, and Cys45 each coordinate Zn(2+). The tract at residues 51 to 80 is B-reader; the sequence is STQNTATNPFDFPMTPAHLSAHRRPTQPTP. The segment at 54 to 107 is disordered; it reads NTATNPFDFPMTPAHLSAHRRPTQPTPTPKPFPAPRGAATGAAAPDFDDLGEPS. The span at 77–87 shows a compositional bias: pro residues; sequence QPTPTPKPFPA. Residues 81–83 form a B-linker region; sequence TPK. Positions 84 to 281 are N-terminal cyclin fold; that stretch reads PFPAPRGAAT…DKLLGSSLND (198 aa). Positions 88 to 98 are enriched in low complexity; sequence PRGAATGAAAP. The tract at residues 282–284 is C-terminal cyclin fold; sequence CPL.

This sequence belongs to the RRN7/TAF1B family.

The protein resides in the nucleus. Its subcellular location is the nucleolus. Its function is as follows. Component of RNA polymerase I core factor complex that acts as a GTF2B/TFIIB-like factor and plays a key role in multiple steps during transcription initiation such as pre-initiation complex (PIC) assembly and postpolymerase recruitment events in polymerase I (Pol I) transcription. Binds rDNA promoters and plays a role in Pol I recruitment. This is TATA box-binding protein-associated factor RNA polymerase I subunit B from Oryza sativa subsp. japonica (Rice).